We begin with the raw amino-acid sequence, 458 residues long: Argininosuccinate lyase (458 aa).

It belongs to the lyase 1 family. Argininosuccinate lyase subfamily.

The protein resides in the cytoplasm. The enzyme catalyses 2-(N(omega)-L-arginino)succinate = fumarate + L-arginine. It functions in the pathway amino-acid biosynthesis; L-arginine biosynthesis; L-arginine from L-ornithine and carbamoyl phosphate: step 3/3. This Geobacter metallireducens (strain ATCC 53774 / DSM 7210 / GS-15) protein is Argininosuccinate lyase.